Here is a 394-residue protein sequence, read N- to C-terminus: MSKEKFERNKPHVNVGTIGHVDHGKTTLTAAITNVLAKHFGGKAFAFDQIDKAPEERERGITINTSHVEYDTAIRHYAHVDCPGHADYVKNMITGAAQMDGAILVVAATDGPMPQTREHILLGRQVGIPYMIVFMNKCDMVDDEELLELVEMEVRELLTEYDFPGDDLPVVRGSALKALEGDAAWEEKIIELANHLDTYIPEPERAIDLPFLMPIEDVFSIAGRGTVVTGRVERGIVKVGETVEIVGIKDTVSTTCTGVEMFRKLLDEGRAGENIGALLRGVKREDVERGQVLAKPGSIKPHTKFESEVYVLSKEEGGRHTPFFKGYRPQFYFRTTDVTGTIELPEGVEMVMPGDNIKMVVTLIAPIAMDDGLRFAIREGGRTVGAGVVASVIA.

One can recognise a tr-type G domain in the interval 10–204 (KPHVNVGTIG…HLDTYIPEPE (195 aa)). A G1 region spans residues 19 to 26 (GHVDHGKT). 19–26 (GHVDHGKT) provides a ligand contact to GTP. Residue T26 participates in Mg(2+) binding. Positions 60-64 (GITIN) are G2. The tract at residues 81–84 (DCPG) is G3. GTP-binding positions include 81-85 (DCPGH) and 136-139 (NKCD). The segment at 136–139 (NKCD) is G4. Residues 174–176 (SAL) form a G5 region.

This sequence belongs to the TRAFAC class translation factor GTPase superfamily. Classic translation factor GTPase family. EF-Tu/EF-1A subfamily. Monomer.

The protein localises to the cytoplasm. The enzyme catalyses GTP + H2O = GDP + phosphate + H(+). In terms of biological role, GTP hydrolase that promotes the GTP-dependent binding of aminoacyl-tRNA to the A-site of ribosomes during protein biosynthesis. This Aeromonas salmonicida (strain A449) protein is Elongation factor Tu.